A 354-amino-acid chain; its full sequence is NADH-quinone oxidoreductase subunit H (354 aa).

Helical transmembrane passes span 23–43, 91–111, 124–144, 162–182, 203–223, 250–270, 291–311, and 330–350; these read LVRAVCIILPLLLCVAYLILW, YIIAPLMVLMPAVAIWAVIPF, LLYVMAISSVGVYGVILAGWA, ISYEIAMGFALVTVLMVTGSL, ILSWNWLPLLPMFGVYFISGV, GMAFALFFLAEYINMIVISAL, IPGFFWLLIKVFLLLSVFIWL, and IFIPLTVGWLVVVAIWLVSPW.

Belongs to the complex I subunit 1 family. In terms of assembly, NDH-1 is composed of 14 different subunits. Subunits NuoA, H, J, K, L, M, N constitute the membrane sector of the complex.

The protein localises to the cell inner membrane. It catalyses the reaction a quinone + NADH + 5 H(+)(in) = a quinol + NAD(+) + 4 H(+)(out). In terms of biological role, NDH-1 shuttles electrons from NADH, via FMN and iron-sulfur (Fe-S) centers, to quinones in the respiratory chain. The immediate electron acceptor for the enzyme in this species is believed to be ubiquinone. Couples the redox reaction to proton translocation (for every two electrons transferred, four hydrogen ions are translocated across the cytoplasmic membrane), and thus conserves the redox energy in a proton gradient. This subunit may bind ubiquinone. The polypeptide is NADH-quinone oxidoreductase subunit H (Ralstonia pickettii (strain 12J)).